The chain runs to 743 residues: 1,4-alpha-glucan branching enzyme GlgB (743 aa).

Asp416 serves as the catalytic Nucleophile. Glu469 acts as the Proton donor in catalysis.

This sequence belongs to the glycosyl hydrolase 13 family. GlgB subfamily. In terms of assembly, monomer.

The catalysed reaction is Transfers a segment of a (1-&gt;4)-alpha-D-glucan chain to a primary hydroxy group in a similar glucan chain.. It participates in glycan biosynthesis; glycogen biosynthesis. Functionally, catalyzes the formation of the alpha-1,6-glucosidic linkages in glycogen by scission of a 1,4-alpha-linked oligosaccharide from growing alpha-1,4-glucan chains and the subsequent attachment of the oligosaccharide to the alpha-1,6 position. This is 1,4-alpha-glucan branching enzyme GlgB from Shewanella baltica (strain OS155 / ATCC BAA-1091).